Reading from the N-terminus, the 179-residue chain is Acireductone dioxygenase (179 aa).

4 residues coordinate Fe(2+): H97, H99, E103, and H141. H97, H99, E103, and H141 together coordinate Ni(2+).

It belongs to the acireductone dioxygenase (ARD) family. In terms of assembly, monomer. It depends on Fe(2+) as a cofactor. Ni(2+) is required as a cofactor.

It carries out the reaction 1,2-dihydroxy-5-(methylsulfanyl)pent-1-en-3-one + O2 = 3-(methylsulfanyl)propanoate + CO + formate + 2 H(+). The catalysed reaction is 1,2-dihydroxy-5-(methylsulfanyl)pent-1-en-3-one + O2 = 4-methylsulfanyl-2-oxobutanoate + formate + 2 H(+). The protein operates within amino-acid biosynthesis; L-methionine biosynthesis via salvage pathway; L-methionine from S-methyl-5-thio-alpha-D-ribose 1-phosphate: step 5/6. Functionally, catalyzes 2 different reactions between oxygen and the acireductone 1,2-dihydroxy-3-keto-5-methylthiopentene (DHK-MTPene) depending upon the metal bound in the active site. Fe-containing acireductone dioxygenase (Fe-ARD) produces formate and 2-keto-4-methylthiobutyrate (KMTB), the alpha-ketoacid precursor of methionine in the methionine recycle pathway. Ni-containing acireductone dioxygenase (Ni-ARD) produces methylthiopropionate, carbon monoxide and formate, and does not lie on the methionine recycle pathway. The chain is Acireductone dioxygenase from Gluconacetobacter diazotrophicus (strain ATCC 49037 / DSM 5601 / CCUG 37298 / CIP 103539 / LMG 7603 / PAl5).